The following is a 436-amino-acid chain: 3-ketoacyl-CoA thiolase (436 aa).

C99 (acyl-thioester intermediate) is an active-site residue. Residues H392 and C422 each act as proton acceptor in the active site.

The protein belongs to the thiolase-like superfamily. Thiolase family. In terms of assembly, heterotetramer of two alpha chains (FadJ) and two beta chains (FadI).

It localises to the cytoplasm. It catalyses the reaction an acyl-CoA + acetyl-CoA = a 3-oxoacyl-CoA + CoA. It participates in lipid metabolism; fatty acid beta-oxidation. Functionally, catalyzes the final step of fatty acid oxidation in which acetyl-CoA is released and the CoA ester of a fatty acid two carbons shorter is formed. This Shewanella frigidimarina (strain NCIMB 400) protein is 3-ketoacyl-CoA thiolase.